A 507-amino-acid chain; its full sequence is MRHPVDMPEKVGTDAKRLFAQPEHLWELTLTEASALVRHRRITSRQLVEAWLSRIADFSELNAFISVDAAAALKQADSYDHYLEAGGDPLPLGGVPIAVKDNIQVVGFANTAGTPALSKFFPTCNARVIEPLLKAGAIVVGKTNMHELAFGTSGYNTAYHIPGVIGVRNAFDHSCIAGGSSSGSGTAVGALLIPAALGTDTGGSVRQPGAVNGCVGFRPTVGRYPVDGITPISPTRDTPGPIARSVEDIVLLDSIITGALPAEVPAAESIRLGVVDQLWADLSEPVRKLTEDALRKLEQQGVQIVRVSMSEIFEMSHAVSMPLALHECRSALTEYLSANETGVSFDELVAGISSPDVRTIFEDYILPGRLGELEGQSVDLEQAYATAMKDARPKLIQSFEFLFKEHQLDAIIHPTTPDLAIKSNPAATSFEAFARMIRNADPASNAGMPGISLPAGLSQQEGLPVGIEIEGLPGSDARLLSIANFIESILGRGPTPTRSGVESKISM.

Catalysis depends on charge relay system residues K100 and S180. S204 acts as the Acyl-ester intermediate in catalysis.

Monomer.

The catalysed reaction is (R)-mandelamide + H2O = (R)-mandelate + NH4(+). With respect to regulation, inhibited by 3,4-dichloroisocoumarin and PMSF. Its function is as follows. Hydrolyzes both the R- and the S-enantiomers of mandelamide, and phenylacetamide. Has lower activity on 3-phenylpropionaide and lactamide. Does not hydrolyze benzamide. Hydrolyzes esters and amides with little steric bulk. Preferentially hydrolyzes aromatic substrates. In Pseudomonas putida (Arthrobacter siderocapsulatus), this protein is Mandelamide hydrolase.